A 491-amino-acid polypeptide reads, in one-letter code: Aspartyl/glutamyl-tRNA(Asn/Gln) amidotransferase subunit B (491 aa).

It belongs to the GatB/GatE family. GatB subfamily. In terms of assembly, heterotrimer of A, B and C subunits.

It carries out the reaction L-glutamyl-tRNA(Gln) + L-glutamine + ATP + H2O = L-glutaminyl-tRNA(Gln) + L-glutamate + ADP + phosphate + H(+). The enzyme catalyses L-aspartyl-tRNA(Asn) + L-glutamine + ATP + H2O = L-asparaginyl-tRNA(Asn) + L-glutamate + ADP + phosphate + 2 H(+). Allows the formation of correctly charged Asn-tRNA(Asn) or Gln-tRNA(Gln) through the transamidation of misacylated Asp-tRNA(Asn) or Glu-tRNA(Gln) in organisms which lack either or both of asparaginyl-tRNA or glutaminyl-tRNA synthetases. The reaction takes place in the presence of glutamine and ATP through an activated phospho-Asp-tRNA(Asn) or phospho-Glu-tRNA(Gln). This chain is Aspartyl/glutamyl-tRNA(Asn/Gln) amidotransferase subunit B, found in Nostoc punctiforme (strain ATCC 29133 / PCC 73102).